We begin with the raw amino-acid sequence, 231 residues long: ATP phosphoribosyltransferase (231 aa).

This sequence belongs to the ATP phosphoribosyltransferase family. Short subfamily. As to quaternary structure, heteromultimer composed of HisG and HisZ subunits.

The protein localises to the cytoplasm. The catalysed reaction is 1-(5-phospho-beta-D-ribosyl)-ATP + diphosphate = 5-phospho-alpha-D-ribose 1-diphosphate + ATP. The protein operates within amino-acid biosynthesis; L-histidine biosynthesis; L-histidine from 5-phospho-alpha-D-ribose 1-diphosphate: step 1/9. Its function is as follows. Catalyzes the condensation of ATP and 5-phosphoribose 1-diphosphate to form N'-(5'-phosphoribosyl)-ATP (PR-ATP). Has a crucial role in the pathway because the rate of histidine biosynthesis seems to be controlled primarily by regulation of HisG enzymatic activity. The polypeptide is ATP phosphoribosyltransferase (Sinorhizobium medicae (strain WSM419) (Ensifer medicae)).